Consider the following 103-residue polypeptide: Small ribosomal subunit protein uS10 (103 aa).

Belongs to the universal ribosomal protein uS10 family. Part of the 30S ribosomal subunit.

Involved in the binding of tRNA to the ribosomes. The chain is Small ribosomal subunit protein uS10 from Saccharophagus degradans (strain 2-40 / ATCC 43961 / DSM 17024).